The following is a 346-amino-acid chain: Galanin receptor type 1 (346 aa).

Over 1–33 the chain is Extracellular; it reads MELAPVNLSEGNGSDPEPPAEPRPLFGIGVENF. 2 N-linked (GlcNAc...) asparagine glycosylation sites follow: N7 and N12. Residues 34–54 traverse the membrane as a helical segment; the sequence is ITLVVFGLIFAMGVLGNSLVI. Topologically, residues 55-69 are cytoplasmic; the sequence is TVLARSKPGKPRSTT. The chain crosses the membrane as a helical span at residues 70-90; it reads NLFILNLSIADLAYLLFCIPF. The Extracellular segment spans residues 91–108; sequence QATVYALPTWVLGAFICK. A disulfide bridge links C107 with C185. The chain crosses the membrane as a helical span at residues 109-130; sequence FIHYFFTVSMLVSIFTLAAMSV. The Cytoplasmic portion of the chain corresponds to 131–150; that stretch reads DRYVAIVHSRRSSSLRVSRN. A helical transmembrane segment spans residues 151–171; that stretch reads ALLGVGFIWALSIAMASPVAY. Topologically, residues 172 to 196 are extracellular; that stretch reads YQRLFHRDSNQTFCWEHWPNQLHKK. The N-linked (GlcNAc...) asparagine glycan is linked to N181. The chain crosses the membrane as a helical span at residues 197–217; sequence AYVVCTFVFGYLLPLLLICFC. The Cytoplasmic segment spans residues 218-246; the sequence is YAKVLNHLHKKLKNMSKKSEASKKKTAQT. Residues 247–267 traverse the membrane as a helical segment; sequence VLVVVVVFGISWLPHHVIHLW. Residues 268 to 269 lie on the Extracellular side of the membrane; sequence AE. A helical transmembrane segment spans residues 270-290; the sequence is FGAFPLTPASFFFRITAHCLA. At 291 to 346 the chain is on the cytoplasmic side; that stretch reads YSNSSVNPIIYAFLSENFRKAYKQVFKCRVCNESPHGDAKEKNRIDTPPSTNCTHV. C318 carries S-palmitoyl cysteine lipidation. The segment covering 326-335 has biased composition (basic and acidic residues); it reads HGDAKEKNRI. Positions 326-346 are disordered; it reads HGDAKEKNRIDTPPSTNCTHV.

This sequence belongs to the G-protein coupled receptor 1 family. In terms of assembly, interacts with GRP39 AND HTR1A. Three cysteine residues are found in the C-terminus, at least one of which may be palmitoylated. In terms of tissue distribution, spinal cord, small intestine, Rin14B insulinoma cells and several brain regions, particularly ventral hippocampus, amygdala, supraoptic nucleus, hypothalamus, thalamus, lateral parabrachial nucleus and locus coeruleus.

The protein localises to the cell membrane. Its function is as follows. Receptor for the hormone galanin. The activity of this receptor is mediated by G proteins that inhibit adenylate cyclase activity. This is Galanin receptor type 1 (Galr1) from Rattus norvegicus (Rat).